A 99-amino-acid polypeptide reads, in one-letter code: Malonate decarboxylase acyl carrier protein (99 aa).

Ser-25 bears the O-(phosphoribosyl dephospho-coenzyme A)serine mark.

Belongs to the MdcC family. In terms of processing, covalently binds the prosthetic group of malonate decarboxylase.

The protein resides in the cytoplasm. Functionally, subunit of malonate decarboxylase, it is an acyl carrier protein to which acetyl and malonyl thioester residues are bound via a 2'-(5''-phosphoribosyl)-3'-dephospho-CoA prosthetic group and turn over during the catalytic mechanism. This Pseudomonas savastanoi pv. phaseolicola (strain 1448A / Race 6) (Pseudomonas syringae pv. phaseolicola (strain 1448A / Race 6)) protein is Malonate decarboxylase acyl carrier protein.